A 303-amino-acid chain; its full sequence is Glycine--tRNA ligase alpha subunit (303 aa).

Belongs to the class-II aminoacyl-tRNA synthetase family. Tetramer of two alpha and two beta subunits.

It localises to the cytoplasm. It carries out the reaction tRNA(Gly) + glycine + ATP = glycyl-tRNA(Gly) + AMP + diphosphate. This chain is Glycine--tRNA ligase alpha subunit, found in Cronobacter sakazakii (strain ATCC BAA-894) (Enterobacter sakazakii).